The sequence spans 358 residues: Glutamine synthetase (358 aa).

Residues 25–104 form the GS beta-grasp domain; it reads VQAEYIWIDA…VLCECYDNDG (80 aa). The GS catalytic domain occupies 111 to 358; it reads YRAHCKKVMD…ILVETTVLNN (248 aa).

The protein belongs to the glutamine synthetase family. In terms of assembly, homooctamer.

The protein resides in the cytoplasm. The enzyme catalyses L-glutamate + NH4(+) + ATP = L-glutamine + ADP + phosphate + H(+). The chain is Glutamine synthetase (GLN1) from Cryptococcus neoformans var. neoformans serotype D (strain B-3501A) (Filobasidiella neoformans).